Reading from the N-terminus, the 466-residue chain is Ribulose bisphosphate carboxylase large chain (466 aa).

At Lys5 the chain carries N6,N6,N6-trimethyllysine. Substrate-binding residues include Asn114 and Thr164. The active-site Proton acceptor is Lys166. Substrate is bound at residue Lys168. Residues Lys192, Asp194, and Glu195 each coordinate Mg(2+). At Lys192 the chain carries N6-carboxylysine. The active-site Proton acceptor is His285. Residues Arg286, His318, and Ser370 each contribute to the substrate site.

Belongs to the RuBisCO large chain family. Type I subfamily. As to quaternary structure, heterohexadecamer of 8 large chains and 8 small chains; disulfide-linked. The disulfide link is formed within the large subunit homodimers. It depends on Mg(2+) as a cofactor. The disulfide bond which can form in the large chain dimeric partners within the hexadecamer appears to be associated with oxidative stress and protein turnover.

The protein localises to the plastid. It is found in the chloroplast. It carries out the reaction 2 (2R)-3-phosphoglycerate + 2 H(+) = D-ribulose 1,5-bisphosphate + CO2 + H2O. It catalyses the reaction D-ribulose 1,5-bisphosphate + O2 = 2-phosphoglycolate + (2R)-3-phosphoglycerate + 2 H(+). RuBisCO catalyzes two reactions: the carboxylation of D-ribulose 1,5-bisphosphate, the primary event in carbon dioxide fixation, as well as the oxidative fragmentation of the pentose substrate in the photorespiration process. Both reactions occur simultaneously and in competition at the same active site. The sequence is that of Ribulose bisphosphate carboxylase large chain from Silene gallica (Common catchfly).